Reading from the N-terminus, the 147-residue chain is Protein LOL4 (147 aa).

Putative zinc finger stretches follow at residues 4–34 (QLIC…LTAV), 44–74 (ELIC…LNST), and 82–112 (HLTC…VNHV).

Its subcellular location is the nucleus. Functionally, putative zinc finger that may be involved in programmed cell death and defense response. The polypeptide is Protein LOL4 (LOL4) (Oryza sativa subsp. japonica (Rice)).